We begin with the raw amino-acid sequence, 196 residues long: NAD(P)H-quinone oxidoreductase subunit I (196 aa).

4Fe-4S ferredoxin-type domains are found at residues 54–83 (GRIHFEFDKCIACEVCVRVCPINLPVVDWV) and 94–123 (KHYSIDFGVCIFCANCVEYCPTNCLSVTEE). 8 residues coordinate [4Fe-4S] cluster: cysteine 63, cysteine 66, cysteine 69, cysteine 73, cysteine 103, cysteine 106, cysteine 109, and cysteine 113. Residues 174-196 (PAGAQRAGERPEAIANTAKSSEN) are disordered.

The protein belongs to the complex I 23 kDa subunit family. In terms of assembly, NDH-1 is composed of at least 11 different subunits. The cofactor is [4Fe-4S] cluster.

It is found in the cellular thylakoid membrane. The enzyme catalyses a plastoquinone + NADH + (n+1) H(+)(in) = a plastoquinol + NAD(+) + n H(+)(out). It catalyses the reaction a plastoquinone + NADPH + (n+1) H(+)(in) = a plastoquinol + NADP(+) + n H(+)(out). In terms of biological role, NDH-1 shuttles electrons from an unknown electron donor, via FMN and iron-sulfur (Fe-S) centers, to quinones in the respiratory and/or the photosynthetic chain. The immediate electron acceptor for the enzyme in this species is believed to be plastoquinone. Couples the redox reaction to proton translocation, and thus conserves the redox energy in a proton gradient. This Thermosynechococcus vestitus (strain NIES-2133 / IAM M-273 / BP-1) protein is NAD(P)H-quinone oxidoreductase subunit I.